A 130-amino-acid chain; its full sequence is Flagellar assembly factor FliW (130 aa).

It belongs to the FliW family. In terms of assembly, interacts with translational regulator CsrA and flagellin(s).

The protein resides in the cytoplasm. Functionally, acts as an anti-CsrA protein, binds CsrA and prevents it from repressing translation of its target genes, one of which is flagellin. Binds to flagellin and participates in the assembly of the flagellum. This is Flagellar assembly factor FliW from Borrelia duttonii (strain Ly).